The chain runs to 495 residues: Cysteine--tRNA ligase (495 aa).

Cysteine 29 contributes to the Zn(2+) binding site. A 'HIGH' region motif is present at residues 31–41; sequence PTVYDYGHIGN. Positions 211, 236, and 240 each coordinate Zn(2+). The 'KMSKS' region signature appears at 268–272; the sequence is KMSKS. ATP is bound at residue lysine 271.

It belongs to the class-I aminoacyl-tRNA synthetase family. As to quaternary structure, monomer. The cofactor is Zn(2+).

It is found in the cytoplasm. The enzyme catalyses tRNA(Cys) + L-cysteine + ATP = L-cysteinyl-tRNA(Cys) + AMP + diphosphate. The polypeptide is Cysteine--tRNA ligase (Koribacter versatilis (strain Ellin345)).